The chain runs to 374 residues: Ribosomal RNA large subunit methyltransferase M (374 aa).

S-adenosyl-L-methionine is bound by residues Ser-188, 221 to 224, Asp-240, Asp-260, and Asp-276; that span reads CPGG. The Proton acceptor role is filled by Lys-305.

The protein belongs to the class I-like SAM-binding methyltransferase superfamily. RNA methyltransferase RlmE family. RlmM subfamily. In terms of assembly, monomer.

The protein resides in the cytoplasm. It catalyses the reaction cytidine(2498) in 23S rRNA + S-adenosyl-L-methionine = 2'-O-methylcytidine(2498) in 23S rRNA + S-adenosyl-L-homocysteine + H(+). Functionally, catalyzes the 2'-O-methylation at nucleotide C2498 in 23S rRNA. This chain is Ribosomal RNA large subunit methyltransferase M, found in Edwardsiella ictaluri (strain 93-146).